The sequence spans 305 residues: Protein ORANGE, chloroplastic (305 aa).

The N-terminal 54 residues, 1–54 (MSCLGRILSVSYPPDPYGSRLSVSKLSSPGRNRRLRWRFTALDSDSSSLDSDSS), are a transit peptide targeting the chloroplast. 2 helical membrane-spanning segments follow: residues 144–164 (VYYA…GLLA) and 197–217 (IVAS…VVEV). A CR-type-like region spans residues 206–297 (VGVISALMVV…CTGMAMASEH (92 aa)). The CXXCXGXG motif repeat unit spans residues 228-235 (CKYCLGTG). The CXXCXXXG motif repeat unit spans residues 239 to 246 (CARCSSTG). Residues 272-279 (CSNCSGAG) form a CXXCXGXG motif repeat. A CXXCXXXG motif repeat occupies 283–290 (CPTCLCTG).

The protein belongs to the orange-like family. In terms of assembly, interacts with ERF1-2. Expressed in young leaves, curds and flower buds.

It localises to the plastid. The protein localises to the chloroplast membrane. It is found in the nucleus. Functionally, involved in chromoplast differentiation. Is associated with a cellular process that triggers the differentiation of pro-plastids or other non-colored plastids into chromoplasts for carotenoid accumulation. Associated with carotenoid accumulation in de-etiolated cotyledons. Controls leaf petiole elongation by suppressing the expression of ERF1 genes. In Brassica oleracea var. botrytis (Cauliflower), this protein is Protein ORANGE, chloroplastic.